The chain runs to 448 residues: Probable glycine dehydrogenase (decarboxylating) subunit 1 (448 aa).

It belongs to the GcvP family. N-terminal subunit subfamily. As to quaternary structure, the glycine cleavage system is composed of four proteins: P, T, L and H. In this organism, the P 'protein' is a heterodimer of two subunits.

It catalyses the reaction N(6)-[(R)-lipoyl]-L-lysyl-[glycine-cleavage complex H protein] + glycine + H(+) = N(6)-[(R)-S(8)-aminomethyldihydrolipoyl]-L-lysyl-[glycine-cleavage complex H protein] + CO2. In terms of biological role, the glycine cleavage system catalyzes the degradation of glycine. The P protein binds the alpha-amino group of glycine through its pyridoxal phosphate cofactor; CO(2) is released and the remaining methylamine moiety is then transferred to the lipoamide cofactor of the H protein. This Listeria monocytogenes serotype 4b (strain F2365) protein is Probable glycine dehydrogenase (decarboxylating) subunit 1.